The following is a 181-amino-acid chain: Acireductone dioxygenase (181 aa).

Fe(2+)-binding residues include His97, His99, Glu103, and His141. Residues His97, His99, Glu103, and His141 each coordinate Ni(2+).

Belongs to the acireductone dioxygenase (ARD) family. In terms of assembly, monomer. Requires Fe(2+) as cofactor. It depends on Ni(2+) as a cofactor.

The enzyme catalyses 1,2-dihydroxy-5-(methylsulfanyl)pent-1-en-3-one + O2 = 3-(methylsulfanyl)propanoate + CO + formate + 2 H(+). It carries out the reaction 1,2-dihydroxy-5-(methylsulfanyl)pent-1-en-3-one + O2 = 4-methylsulfanyl-2-oxobutanoate + formate + 2 H(+). It functions in the pathway amino-acid biosynthesis; L-methionine biosynthesis via salvage pathway; L-methionine from S-methyl-5-thio-alpha-D-ribose 1-phosphate: step 5/6. Catalyzes 2 different reactions between oxygen and the acireductone 1,2-dihydroxy-3-keto-5-methylthiopentene (DHK-MTPene) depending upon the metal bound in the active site. Fe-containing acireductone dioxygenase (Fe-ARD) produces formate and 2-keto-4-methylthiobutyrate (KMTB), the alpha-ketoacid precursor of methionine in the methionine recycle pathway. Ni-containing acireductone dioxygenase (Ni-ARD) produces methylthiopropionate, carbon monoxide and formate, and does not lie on the methionine recycle pathway. The sequence is that of Acireductone dioxygenase from Pseudomonas syringae pv. syringae (strain B728a).